A 137-amino-acid chain; its full sequence is Nucleoside diphosphate kinase (137 aa).

6 residues coordinate ATP: K9, F57, R85, T91, R102, and N112. H115 serves as the catalytic Pros-phosphohistidine intermediate.

It belongs to the NDK family. As to quaternary structure, homotetramer. Mg(2+) is required as a cofactor.

The protein localises to the cytoplasm. The enzyme catalyses a 2'-deoxyribonucleoside 5'-diphosphate + ATP = a 2'-deoxyribonucleoside 5'-triphosphate + ADP. It carries out the reaction a ribonucleoside 5'-diphosphate + ATP = a ribonucleoside 5'-triphosphate + ADP. Its function is as follows. Major role in the synthesis of nucleoside triphosphates other than ATP. The ATP gamma phosphate is transferred to the NDP beta phosphate via a ping-pong mechanism, using a phosphorylated active-site intermediate. The chain is Nucleoside diphosphate kinase from Campylobacter fetus subsp. fetus (strain 82-40).